A 31-amino-acid polypeptide reads, in one-letter code: Cytochrome b6-f complex subunit 8 (31 aa).

Residues 5–25 (IVSLAWAALMVVFTFSLSLVV) form a helical membrane-spanning segment.

It belongs to the PetN family. In terms of assembly, the 4 large subunits of the cytochrome b6-f complex are cytochrome b6, subunit IV (17 kDa polypeptide, PetD), cytochrome f and the Rieske protein, while the 4 small subunits are PetG, PetL, PetM and PetN. The complex functions as a dimer.

The protein resides in the plastid. Its subcellular location is the chloroplast thylakoid membrane. In terms of biological role, component of the cytochrome b6-f complex, which mediates electron transfer between photosystem II (PSII) and photosystem I (PSI), cyclic electron flow around PSI, and state transitions. This Cicer arietinum (Chickpea) protein is Cytochrome b6-f complex subunit 8.